The sequence spans 125 residues: S-adenosylmethionine decarboxylase proenzyme (125 aa).

The active-site Schiff-base intermediate with substrate; via pyruvic acid is the Ser61. Pyruvic acid (Ser); by autocatalysis is present on Ser61. Residue His66 is the Proton acceptor; for processing activity of the active site. Cys81 (proton donor; for catalytic activity) is an active-site residue.

Belongs to the prokaryotic AdoMetDC family. Type 1 subfamily. Heterotetramer of two alpha and two beta chains arranged as a dimer of alpha/beta heterodimers. Requires pyruvate as cofactor. Post-translationally, is synthesized initially as an inactive proenzyme. Formation of the active enzyme involves a self-maturation process in which the active site pyruvoyl group is generated from an internal serine residue via an autocatalytic post-translational modification. Two non-identical subunits are generated from the proenzyme in this reaction, and the pyruvate is formed at the N-terminus of the alpha chain, which is derived from the carboxyl end of the proenzyme. The post-translation cleavage follows an unusual pathway, termed non-hydrolytic serinolysis, in which the side chain hydroxyl group of the serine supplies its oxygen atom to form the C-terminus of the beta chain, while the remainder of the serine residue undergoes an oxidative deamination to produce ammonia and the pyruvoyl group blocking the N-terminus of the alpha chain.

The enzyme catalyses S-adenosyl-L-methionine + H(+) = S-adenosyl 3-(methylsulfanyl)propylamine + CO2. It functions in the pathway amine and polyamine biosynthesis; S-adenosylmethioninamine biosynthesis; S-adenosylmethioninamine from S-adenosyl-L-methionine: step 1/1. Its function is as follows. Catalyzes the decarboxylation of S-adenosylmethionine to S-adenosylmethioninamine (dcAdoMet), the propylamine donor required for the synthesis of the polyamines spermine and spermidine from the diamine putrescine. This chain is S-adenosylmethionine decarboxylase proenzyme, found in Prochlorococcus marinus (strain MIT 9313).